Reading from the N-terminus, the 184-residue chain is ATP synthase subunit b, chloroplastic (184 aa).

Residues L31 to L53 form a helical membrane-spanning segment.

It belongs to the ATPase B chain family. In terms of assembly, F-type ATPases have 2 components, F(1) - the catalytic core - and F(0) - the membrane proton channel. F(1) has five subunits: alpha(3), beta(3), gamma(1), delta(1), epsilon(1). F(0) has four main subunits: a(1), b(1), b'(1) and c(10-14). The alpha and beta chains form an alternating ring which encloses part of the gamma chain. F(1) is attached to F(0) by a central stalk formed by the gamma and epsilon chains, while a peripheral stalk is formed by the delta, b and b' chains.

The protein localises to the plastid. It localises to the chloroplast thylakoid membrane. In terms of biological role, f(1)F(0) ATP synthase produces ATP from ADP in the presence of a proton or sodium gradient. F-type ATPases consist of two structural domains, F(1) containing the extramembraneous catalytic core and F(0) containing the membrane proton channel, linked together by a central stalk and a peripheral stalk. During catalysis, ATP synthesis in the catalytic domain of F(1) is coupled via a rotary mechanism of the central stalk subunits to proton translocation. Its function is as follows. Component of the F(0) channel, it forms part of the peripheral stalk, linking F(1) to F(0). The protein is ATP synthase subunit b, chloroplastic of Staurastrum punctulatum (Green alga).